The following is a 189-amino-acid chain: Adenylate kinase (189 aa).

10–15 (AAGKGT) lines the ATP pocket. Residues 30-59 (STGDMLRAARASGSELGQRVAKIMDEGGLV) are NMP. Residues Thr-31, Arg-36, 57-59 (GLV), 85-88 (GFPR), and Gln-92 contribute to the AMP site. An LID region spans residues 126 to 136 (KRFEEQGRADD). Arg-127 provides a ligand contact to ATP. AMP-binding residues include Arg-133 and Arg-144. Gly-172 provides a ligand contact to ATP.

This sequence belongs to the adenylate kinase family. Monomer.

The protein localises to the cytoplasm. It catalyses the reaction AMP + ATP = 2 ADP. Its pathway is purine metabolism; AMP biosynthesis via salvage pathway; AMP from ADP: step 1/1. Catalyzes the reversible transfer of the terminal phosphate group between ATP and AMP. Plays an important role in cellular energy homeostasis and in adenine nucleotide metabolism. This chain is Adenylate kinase, found in Hyphomonas neptunium (strain ATCC 15444).